Reading from the N-terminus, the 615-residue chain is Putative DNA ligase 205R (615 aa).

Residue lysine 101 is the N6-AMP-lysine intermediate of the active site.

It belongs to the NAD-dependent DNA ligase family.

The catalysed reaction is NAD(+) + (deoxyribonucleotide)n-3'-hydroxyl + 5'-phospho-(deoxyribonucleotide)m = (deoxyribonucleotide)n+m + AMP + beta-nicotinamide D-nucleotide.. Its function is as follows. Catalyzes the formation of phosphodiester linkages between 5'-phosphoryl and 3'-hydroxyl groups in double-stranded DNA using NAD as a coenzyme and as the energy source for the reaction. This Invertebrate iridescent virus 6 (IIV-6) protein is Putative DNA ligase 205R.